Here is a 28-residue protein sequence, read N- to C-terminus: Dermaseptin-SP1 (28 aa).

As to expression, expressed by the skin glands.

It is found in the secreted. Its function is as follows. Probable antimicrobial peptide which stimulates insulin-release in glucose-responsive BRIN-BD 11 cells. This is Dermaseptin-SP1 from Agalychnis spurrelli (Gliding leaf frog).